Consider the following 691-residue polypeptide: DNA ligase (691 aa).

NAD(+) contacts are provided by residues 41-45, 90-91, and glutamate 130; these read DAEYD and SL. Lysine 132 (N6-AMP-lysine intermediate) is an active-site residue. 4 residues coordinate NAD(+): arginine 153, glutamate 190, lysine 307, and lysine 331. Positions 425, 428, 443, and 449 each coordinate Zn(2+). Positions 610–691 constitute a BRCT domain; sequence APQGVLAGKT…MHTLLEGHAR (82 aa).

The protein belongs to the NAD-dependent DNA ligase family. LigA subfamily. The cofactor is Mg(2+). Mn(2+) serves as cofactor.

It catalyses the reaction NAD(+) + (deoxyribonucleotide)n-3'-hydroxyl + 5'-phospho-(deoxyribonucleotide)m = (deoxyribonucleotide)n+m + AMP + beta-nicotinamide D-nucleotide.. DNA ligase that catalyzes the formation of phosphodiester linkages between 5'-phosphoryl and 3'-hydroxyl groups in double-stranded DNA using NAD as a coenzyme and as the energy source for the reaction. It is essential for DNA replication and repair of damaged DNA. The polypeptide is DNA ligase (Burkholderia mallei (strain NCTC 10247)).